Reading from the N-terminus, the 219-residue chain is 7-cyano-7-deazaguanine synthase (219 aa).

An ATP-binding site is contributed by 10–20; sequence FSGGQDSTTCL. C188, C197, C200, and C203 together coordinate Zn(2+).

It belongs to the QueC family. In terms of assembly, homodimer. Zn(2+) serves as cofactor.

It catalyses the reaction 7-carboxy-7-deazaguanine + NH4(+) + ATP = 7-cyano-7-deazaguanine + ADP + phosphate + H2O + H(+). The protein operates within purine metabolism; 7-cyano-7-deazaguanine biosynthesis. Catalyzes the ATP-dependent conversion of 7-carboxy-7-deazaguanine (CDG) to 7-cyano-7-deazaguanine (preQ(0)). The chain is 7-cyano-7-deazaguanine synthase from Clostridium botulinum (strain Langeland / NCTC 10281 / Type F).